Here is a 173-residue protein sequence, read N- to C-terminus: MAIILGVDPGSRITGYGVINCVGRQQVYVGSGCIRTSSDELPLRLKQIFDGLSEIIRQYQPDEFAIERVFMAKNADSALKLGQARGAAIVAATAANLPVAEYSATQIKSAVVGTGRAQKSQVQHMIQQLLKLPSAPQADAADALGVAVCHYHTNQSLAAMGGRANSRTYGRYK.

Catalysis depends on residues Asp8, Glu67, and Asp139. 3 residues coordinate Mg(2+): Asp8, Glu67, and Asp139.

The protein belongs to the RuvC family. Homodimer which binds Holliday junction (HJ) DNA. The HJ becomes 2-fold symmetrical on binding to RuvC with unstacked arms; it has a different conformation from HJ DNA in complex with RuvA. In the full resolvosome a probable DNA-RuvA(4)-RuvB(12)-RuvC(2) complex forms which resolves the HJ. It depends on Mg(2+) as a cofactor.

The protein resides in the cytoplasm. The catalysed reaction is Endonucleolytic cleavage at a junction such as a reciprocal single-stranded crossover between two homologous DNA duplexes (Holliday junction).. Its function is as follows. The RuvA-RuvB-RuvC complex processes Holliday junction (HJ) DNA during genetic recombination and DNA repair. Endonuclease that resolves HJ intermediates. Cleaves cruciform DNA by making single-stranded nicks across the HJ at symmetrical positions within the homologous arms, yielding a 5'-phosphate and a 3'-hydroxyl group; requires a central core of homology in the junction. The consensus cleavage sequence is 5'-(A/T)TT(C/G)-3'. Cleavage occurs on the 3'-side of the TT dinucleotide at the point of strand exchange. HJ branch migration catalyzed by RuvA-RuvB allows RuvC to scan DNA until it finds its consensus sequence, where it cleaves and resolves the cruciform DNA. The chain is Crossover junction endodeoxyribonuclease RuvC from Shewanella piezotolerans (strain WP3 / JCM 13877).